Consider the following 446-residue polypeptide: C4-dicarboxylate transport protein 2 (446 aa).

A run of 10 helical transmembrane segments spans residues 7–26, 46–64, 77–99, 152–171, 192–211, 221–243, 291–313, 318–340, 353–375, and 381–403; these read PLFG…GIWA, MLIA…CGAG, VIYF…YAFG, ILQV…LLGE, AVVI…FTVG, LGFL…LGGI, VVGL…YLTL, IAQA…VALI, IVIL…VLVL, and IGIA…IAAW.

This sequence belongs to the dicarboxylate/amino acid:cation symporter (DAACS) (TC 2.A.23) family.

The protein resides in the cell inner membrane. Its function is as follows. Responsible for the transport of dicarboxylates such as succinate, fumarate, and malate from the periplasm across the membrane. This Ralstonia nicotianae (strain ATCC BAA-1114 / GMI1000) (Ralstonia solanacearum) protein is C4-dicarboxylate transport protein 2 (dctA2).